Here is a 526-residue protein sequence, read N- to C-terminus: Probable feruloyl esterase B-2 (526 aa).

An N-terminal signal peptide occupies residues 1 to 18 (MTKLSLLPLLALASAVLA). Disulfide bonds link Cys27/Cys74 and Cys62/Cys113. Asn52, Asn97, and Asn137 each carry an N-linked (GlcNAc...) asparagine glycan. Disulfide bonds link Cys186–Cys441, Cys255–Cys272, Cys281–Cys291, and Cys503–Cys525. Ser187 functions as the Acyl-ester intermediate in the catalytic mechanism. A glycan (N-linked (GlcNAc...) asparagine) is linked at Asn233. Ca(2+) is bound by residues Asp256, Asp259, Ala261, Asp263, and Ile265. N-linked (GlcNAc...) asparagine glycosylation occurs at Asn311. Catalysis depends on charge relay system residues Asp400 and His440. N-linked (GlcNAc...) asparagine glycosylation occurs at Asn516.

It belongs to the tannase family.

It is found in the secreted. The catalysed reaction is feruloyl-polysaccharide + H2O = ferulate + polysaccharide.. Involved in degradation of plant cell walls. Hydrolyzes the feruloyl-arabinose ester bond in arabinoxylans as well as the feruloyl-galactose and feruloyl-arabinose ester bonds in pectin. The protein is Probable feruloyl esterase B-2 (faeB-2) of Neosartorya fischeri (strain ATCC 1020 / DSM 3700 / CBS 544.65 / FGSC A1164 / JCM 1740 / NRRL 181 / WB 181) (Aspergillus fischerianus).